A 338-amino-acid chain; its full sequence is MKVYYDKDADLSLIKQRKVAIVGYGSQGHAHANNLKDSGVDVTVALRPGSASAKKAENAGLTVKSVPEAVAGADLVMILTPDEFQSRLYRDEIEPNIKQGATLAFAHGFSIHYNQVVPRADLDVIMIAPKAPGHTVRSEFVKGGGIPDLIAIYQDASGKAKETALSYASAIGGGRTGIIETTFKDETETDLFGEQAVLCGGAVELVKAGFDTLVEAGYAPEMAYFECLHELKLIVDLMYEGGIANMNYSISNNAEYGEYVTGVKVINEQSRAAMKECLANIQNGAYAKRFILEGQANYPEMTAWRRNNAAHQIEVVGAKLRSMMPWIAANKLVDHSKN.

The KARI N-terminal Rossmann domain occupies 1 to 181; sequence MKVYYDKDAD…GGGRTGIIET (181 aa). NADP(+)-binding positions include 24–27, R47, S50, S52, and 82–85; these read YGSQ and DEFQ. Residue H107 is part of the active site. G133 contributes to the NADP(+) binding site. The KARI C-terminal knotted domain maps to 182–327; it reads TFKDETETDL…AKLRSMMPWI (146 aa). Mg(2+) is bound by residues D190, E194, E226, and E230. S251 provides a ligand contact to substrate.

The protein belongs to the ketol-acid reductoisomerase family. Requires Mg(2+) as cofactor.

The catalysed reaction is (2R)-2,3-dihydroxy-3-methylbutanoate + NADP(+) = (2S)-2-acetolactate + NADPH + H(+). It catalyses the reaction (2R,3R)-2,3-dihydroxy-3-methylpentanoate + NADP(+) = (S)-2-ethyl-2-hydroxy-3-oxobutanoate + NADPH + H(+). The protein operates within amino-acid biosynthesis; L-isoleucine biosynthesis; L-isoleucine from 2-oxobutanoate: step 2/4. It functions in the pathway amino-acid biosynthesis; L-valine biosynthesis; L-valine from pyruvate: step 2/4. Its function is as follows. Involved in the biosynthesis of branched-chain amino acids (BCAA). Catalyzes an alkyl-migration followed by a ketol-acid reduction of (S)-2-acetolactate (S2AL) to yield (R)-2,3-dihydroxy-isovalerate. In the isomerase reaction, S2AL is rearranged via a Mg-dependent methyl migration to produce 3-hydroxy-3-methyl-2-ketobutyrate (HMKB). In the reductase reaction, this 2-ketoacid undergoes a metal-dependent reduction by NADPH to yield (R)-2,3-dihydroxy-isovalerate. The chain is Ketol-acid reductoisomerase (NADP(+)) from Thiobacillus denitrificans (strain ATCC 25259 / T1).